The primary structure comprises 368 residues: Ferredoxin--NADP reductase 2 (368 aa).

FAD-binding residues include aspartate 57, glutamine 65, tyrosine 70, valine 110, phenylalanine 145, aspartate 310, and threonine 351.

Belongs to the ferredoxin--NADP reductase type 2 family. As to quaternary structure, homodimer. Requires FAD as cofactor.

It carries out the reaction 2 reduced [2Fe-2S]-[ferredoxin] + NADP(+) + H(+) = 2 oxidized [2Fe-2S]-[ferredoxin] + NADPH. The protein is Ferredoxin--NADP reductase 2 of Cupriavidus pinatubonensis (strain JMP 134 / LMG 1197) (Cupriavidus necator (strain JMP 134)).